Reading from the N-terminus, the 931-residue chain is Protein unc-45 homolog B (931 aa).

TPR repeat units follow at residues 6–39 (AVQL…TKDK), 43–76 (ATLY…NSSD), and 77–110 (IKAL…EPRN). 3 ARM repeats span residues 169–208 (EAGA…GMCS), 211–250 (QARA…AIID), and 751–790 (DKLR…NMVL).

In terms of assembly, interacts with HSP90 in an ATP-independent manner. Interacts with UBE4B; the interaction may target UNC45B for proteasomal degradation. In terms of tissue distribution, expressed in eye lens tissues. Expressed in muscle (at protein level).

It is found in the cytoplasm. Its subcellular location is the myofibril. The protein resides in the sarcomere. It localises to the z line. The protein localises to the a band. It is found in the perinuclear region. Its subcellular location is the cytosol. Acts as a co-chaperone for HSP90 and is required for proper folding of the myosin motor domain. Plays a role in sarcomere formation during muscle cell development. Is necessary for normal early lens development. The chain is Protein unc-45 homolog B from Homo sapiens (Human).